Reading from the N-terminus, the 223-residue chain is Urease subunit alpha (223 aa).

The urease gamma stretch occupies residues 1–101 (MHFTQQQLQR…LVTIHEPIAN (101 aa)). Residues 102–223 (DDKIKAGEIF…LSKAKEKGFL (122 aa)) are urease beta.

It in the N-terminal section; belongs to the urease gamma subunit family. This sequence in the C-terminal section; belongs to the urease beta subunit family. As to quaternary structure, heterohexamer of 3 UreA (alpha) and 3 UreB (beta) subunits.

The protein localises to the cytoplasm. It catalyses the reaction urea + 2 H2O + H(+) = hydrogencarbonate + 2 NH4(+). It participates in nitrogen metabolism; urea degradation; CO(2) and NH(3) from urea (urease route): step 1/1. The chain is Urease subunit alpha from Campylobacter lari.